The primary structure comprises 1839 residues: Non-structural replication polyprotein (1839 aa).

The region spanning 58-219 (SGLGVTPHPH…NQPLQAPSWL (162 aa)) is the Alphavirus-like MT domain. 3 disordered regions span residues 253-277 (PKPSLSARPPVLPNQPPRATTPNSQ), 578-623 (AQAS…PLTR), and 645-703 (TSAE…PSGA). The segment covering 584–599 (APRPPAFHAIPLPPQP) has biased composition (pro residues). The segment covering 600–614 (STSSSPPLQEPTLSP) has biased composition (low complexity). Pro residues predominate over residues 652–670 (PLNPPTPSPTPDVPPPDSP). In terms of domain architecture, Peptidase C21 spans 723–877 (SHPFTPLADD…RLAASAPRCN (155 aa)). Residues cysteine 776 and histidine 862 each act as for protease activity in the active site. Residues 935 to 1092 (KGPSPREKLT…RFKSYIDCYC (158 aa)) enclose the (+)RNA virus helicase ATP-binding domain. 965–972 (GFAGCGKT) serves as a coordination point for ATP. The region spanning 1093 to 1224 (FWSHRIPKQI…GTIDLNNVFP (132 aa)) is the (+)RNA virus helicase C-terminal domain. The RdRp catalytic domain occupies 1567–1673 (SSYIANDYTA…CGTPPPSPLW (107 aa)).

This sequence belongs to the Tymoviridae non-structural replication polyprotein family. Specific enzymatic cleavages by the host yield mature proteins.

The catalysed reaction is RNA(n) + a ribonucleoside 5'-triphosphate = RNA(n+1) + diphosphate. In terms of biological role, acts as a cysteine protease, methyltransferase and deubiquitinase. The cysteine protease activity cleaves the polyprotein giving rise to mature proteins. The methyltransferase domain is probably involved in viral RNA capping. Its function is as follows. RNA-directed RNA polymerase is responsible for the replication and transcription of the genome. This Solanum lycopersicum (Tomato) protein is Non-structural replication polyprotein.